A 242-amino-acid polypeptide reads, in one-letter code: Succinyl-CoA:3-ketoacid coenzyme A transferase subunit A (242 aa).

33–39 (GGFGLCG) contributes to the CoA binding site.

It belongs to the 3-oxoacid CoA-transferase subunit A family. In terms of assembly, heterodimer of a subunit A and a subunit B.

It catalyses the reaction a 3-oxo acid + succinyl-CoA = a 3-oxoacyl-CoA + succinate. It participates in bacterial outer membrane biogenesis; lipopolysaccharide biosynthesis. The protein is Succinyl-CoA:3-ketoacid coenzyme A transferase subunit A (lpsI) of Xanthomonas campestris pv. campestris (strain ATCC 33913 / DSM 3586 / NCPPB 528 / LMG 568 / P 25).